A 348-amino-acid chain; its full sequence is Protein RecA (348 aa).

An ATP-binding site is contributed by 69-76; the sequence is GPESSGKT.

The protein belongs to the RecA family.

Its subcellular location is the cytoplasm. Its function is as follows. Can catalyze the hydrolysis of ATP in the presence of single-stranded DNA, the ATP-dependent uptake of single-stranded DNA by duplex DNA, and the ATP-dependent hybridization of homologous single-stranded DNAs. It interacts with LexA causing its activation and leading to its autocatalytic cleavage. The polypeptide is Protein RecA (Picosynechococcus sp. (strain ATCC 27264 / PCC 7002 / PR-6) (Agmenellum quadruplicatum)).